A 396-amino-acid polypeptide reads, in one-letter code: Phosphoglycerate kinase (396 aa).

Substrate contacts are provided by residues 21 to 23, Arg36, 59 to 62, Arg119, and Arg156; these read DFN and HLGK. ATP is bound by residues Lys206, Gly294, Glu325, and 352 to 355; that span reads GGDS.

Belongs to the phosphoglycerate kinase family. As to quaternary structure, monomer.

It is found in the cytoplasm. It catalyses the reaction (2R)-3-phosphoglycerate + ATP = (2R)-3-phospho-glyceroyl phosphate + ADP. The protein operates within carbohydrate degradation; glycolysis; pyruvate from D-glyceraldehyde 3-phosphate: step 2/5. The protein is Phosphoglycerate kinase of Listeria welshimeri serovar 6b (strain ATCC 35897 / DSM 20650 / CCUG 15529 / CIP 8149 / NCTC 11857 / SLCC 5334 / V8).